A 209-amino-acid polypeptide reads, in one-letter code: Rac-like GTP-binding protein ARAC7 (209 aa).

Residue 13 to 20 (GDGAVGKT) participates in GTP binding. The Effector region signature appears at 35-43 (YIPTVFDNF). GTP is bound by residues 60 to 64 (DTAGQ) and 118 to 121 (TKLD). 3 S-palmitoyl cysteine lipidation sites follow: cysteine 196, cysteine 203, and cysteine 206.

This sequence belongs to the small GTPase superfamily. Rho family. Although this sequence has a C-terminal -CXXX, it is palmitoylated at Cys-206, rather than prenylated.

The protein resides in the membrane. Functionally, acts as a negative regulator of abscisic acid (ABA) responses. This is Rac-like GTP-binding protein ARAC7 (ARAC7) from Arabidopsis thaliana (Mouse-ear cress).